We begin with the raw amino-acid sequence, 156 residues long: EPIDERMAL PATTERNING FACTOR-like protein 6 (156 aa).

The N-terminal stretch at 1-47 is a signal peptide; that stretch reads MGFERTSSSLSLLSSSLPSSLQPSENTRAKFSLFYLLLLFFVLCVIA. 3 cysteine pairs are disulfide-bonded: Cys-113–Cys-147, Cys-117–Cys-123, and Cys-120–Cys-149.

This sequence belongs to the plant cysteine rich small secretory peptide family. Epidermal patterning factor subfamily. As to quaternary structure, interacts with ERECTA. Expressed in the internal layers of the root, hypocotyl and stems, and in the midrib of developing rosette leaves. Detected in a ring of cells surrounding the vascular elements. Expressed in developing stems soon after bolting, in inflorescence stems, near the root apex and in the chalazal region of ovules. Not found in cotyledons or in stomatal precursors or stomata.

It is found in the secreted. Its function is as follows. Acts primarily as positive regulator of inflorescence growth. Endodermal expression is sufficient for proper inflorescence architecture. Redundantly involved with EPFL4 in procambial development regulation. Also acts as tissue-specific regulator of epidermal pattern. Controls stomatal patterning by repressing stomatal production. TMM (AC Q9SSD1) functions to dampen or block CHAL signaling. Not processed by SDD1 (AC O64495). Acts as growth-regulatory ligand for ERECTA family receptors. The protein is EPIDERMAL PATTERNING FACTOR-like protein 6 of Arabidopsis thaliana (Mouse-ear cress).